Here is a 202-residue protein sequence, read N- to C-terminus: Small ribosomal subunit protein uS4c (202 aa).

One can recognise an S4 RNA-binding domain in the interval 90–165; sequence MRLDNILFRL…SQKYKIPNHL (76 aa).

This sequence belongs to the universal ribosomal protein uS4 family. Part of the 30S ribosomal subunit. Contacts protein S5. The interaction surface between S4 and S5 is involved in control of translational fidelity.

Its subcellular location is the plastid. The protein localises to the chloroplast. One of the primary rRNA binding proteins, it binds directly to 16S rRNA where it nucleates assembly of the body of the 30S subunit. Its function is as follows. With S5 and S12 plays an important role in translational accuracy. In Diphyscium foliosum (Nut-moss), this protein is Small ribosomal subunit protein uS4c (rps4).